The chain runs to 239 residues: Ribosomal RNA small subunit methyltransferase G (239 aa).

Residues Gly79, Phe84, 130 to 131 (AE), and Arg149 each bind S-adenosyl-L-methionine. Residues 218–227 (KHKKTPKKYP) are compositionally biased toward basic residues. The tract at residues 218 to 239 (KHKKTPKKYPRQAGTPNKKPIA) is disordered.

It belongs to the methyltransferase superfamily. RNA methyltransferase RsmG family.

Its subcellular location is the cytoplasm. Its function is as follows. Specifically methylates the N7 position of a guanine in 16S rRNA. This is Ribosomal RNA small subunit methyltransferase G from Leuconostoc citreum (strain KM20).